The primary structure comprises 193 residues: Probable GTP-binding protein EngB (193 aa).

An EngB-type G domain is found at 20 to 193 (GVPEVAFAGR…ELAHEISRCI (174 aa)). GTP-binding positions include 28–35 (GRSNVGKS), 55–59 (GSTRQ), 73–76 (DLPG), 140–143 (TKAD), and 171–176 (IMWVSS). Mg(2+) is bound by residues Ser-35 and Thr-57.

This sequence belongs to the TRAFAC class TrmE-Era-EngA-EngB-Septin-like GTPase superfamily. EngB GTPase family. The cofactor is Mg(2+).

In terms of biological role, necessary for normal cell division and for the maintenance of normal septation. This chain is Probable GTP-binding protein EngB, found in Anaplasma phagocytophilum (strain HZ).